Here is a 193-residue protein sequence, read N- to C-terminus: MSGDSGVKRGAMLTSNLFDLTGERQIFRRACFLPFEVQISSKKSVNKLLGKANNSLFLKFLKCVNPEKIELKEEDPLYFSRDFLLNEGIPVPENYYGNFERAMLKGWKKLYLTSPEKFEEVRYYHKQDQKKLVPCYKVQIKDAGYLTPLEEFDNGFLQDSYLILKEEFLKTIGVSEKRNIFTSLFSVIRISKR.

This is an uncharacterized protein from Aquifex aeolicus (strain VF5).